The chain runs to 224 residues: 7-cyano-7-deazaguanine synthase (224 aa).

Residue 12-22 (LSGGLDSSTVT) coordinates ATP. Positions 193, 201, 204, and 207 each coordinate Zn(2+).

This sequence belongs to the QueC family. Requires Zn(2+) as cofactor.

The enzyme catalyses 7-carboxy-7-deazaguanine + NH4(+) + ATP = 7-cyano-7-deazaguanine + ADP + phosphate + H2O + H(+). Its pathway is purine metabolism; 7-cyano-7-deazaguanine biosynthesis. In terms of biological role, catalyzes the ATP-dependent conversion of 7-carboxy-7-deazaguanine (CDG) to 7-cyano-7-deazaguanine (preQ(0)). The polypeptide is 7-cyano-7-deazaguanine synthase (Prochlorococcus marinus (strain AS9601)).